The primary structure comprises 221 residues: Probable glutathione S-transferase parC (221 aa).

Residues 4 to 83 (EEVILLDFWP…YIEEVWKDKA (80 aa)) enclose the GST N-terminal domain. Glutathione-binding positions include Ser-14, Lys-41, Ile-55, and 67 to 68 (ES). Residues 90 to 214 (DPYDRAQARF…PKVLEFVKVL (125 aa)) form the GST C-terminal domain.

This sequence belongs to the GST superfamily. Phi family. In terms of tissue distribution, abundant in seedlings and roots. It is also found in the shoot tips, flowers and leaves.

The enzyme catalyses RX + glutathione = an S-substituted glutathione + a halide anion + H(+). Functionally, conjugation of reduced glutathione to a wide number of exogenous and endogenous hydrophobic electrophiles. This chain is Probable glutathione S-transferase parC (PARC), found in Nicotiana tabacum (Common tobacco).